Here is a 426-residue protein sequence, read N- to C-terminus: Histidinol dehydrogenase (426 aa).

Tyr-123, Gln-185, and Asn-208 together coordinate NAD(+). 3 residues coordinate substrate: Ser-231, Gln-253, and His-256. Positions 253 and 256 each coordinate Zn(2+). Catalysis depends on proton acceptor residues Glu-321 and His-322. Substrate is bound by residues His-322, Asp-355, Glu-409, and His-414. Position 355 (Asp-355) interacts with Zn(2+). His-414 lines the Zn(2+) pocket.

The protein belongs to the histidinol dehydrogenase family. Zn(2+) serves as cofactor.

The catalysed reaction is L-histidinol + 2 NAD(+) + H2O = L-histidine + 2 NADH + 3 H(+). It functions in the pathway amino-acid biosynthesis; L-histidine biosynthesis; L-histidine from 5-phospho-alpha-D-ribose 1-diphosphate: step 9/9. Its function is as follows. Catalyzes the sequential NAD-dependent oxidations of L-histidinol to L-histidinaldehyde and then to L-histidine. This Bacillus licheniformis (strain ATCC 14580 / DSM 13 / JCM 2505 / CCUG 7422 / NBRC 12200 / NCIMB 9375 / NCTC 10341 / NRRL NRS-1264 / Gibson 46) protein is Histidinol dehydrogenase.